A 588-amino-acid polypeptide reads, in one-letter code: Succinate dehydrogenase flavoprotein subunit (588 aa).

FAD contacts are provided by residues 14-19 (GAGGAG), 37-52 (SKVF…AQGG), and Asp221. The residue at position 45 (His45) is a Tele-8alpha-FAD histidine. Substrate is bound by residues His242 and Thr254. Lys267 is modified (N6-acetyllysine). The Proton acceptor role is filled by Arg286. His354 contacts substrate. Position 388 (Glu388) interacts with FAD. A substrate-binding site is contributed by Arg399. 404-405 (SL) is a binding site for FAD.

It belongs to the FAD-dependent oxidoreductase 2 family. FRD/SDH subfamily. As to quaternary structure, part of an enzyme complex containing four subunits: a flavoprotein, an iron-sulfur, cytochrome b-556, and a hydrophobic anchor protein. The complex forms trimers. FAD serves as cofactor.

The protein resides in the cell inner membrane. It carries out the reaction a quinone + succinate = fumarate + a quinol. It functions in the pathway carbohydrate metabolism; tricarboxylic acid cycle; fumarate from succinate (bacterial route): step 1/1. Functionally, two distinct, membrane-bound, FAD-containing enzymes are responsible for the catalysis of fumarate and succinate interconversion; the fumarate reductase is used in anaerobic growth, and the succinate dehydrogenase is used in aerobic growth. The sequence is that of Succinate dehydrogenase flavoprotein subunit (sdhA) from Escherichia coli O157:H7.